Here is a 100-residue protein sequence, read N- to C-terminus: Apolipoprotein C-II (100 aa).

Residues 1 to 25 form the signal peptide; it reads MDARSLLLLWLLLPLLLLLGCEVQG. Positions 65 to 73 are lipid binding; sequence AVDETIRDI. Positions 77–100 are lipoprotein lipase cofactor; sequence GSAAISTYTGILTDQILTMLQGKQ.

It belongs to the apolipoprotein C2 family. In terms of processing, proapolipoprotein C-II is synthesized as a sialic acid containing glycoprotein which is subsequently desialylated prior to its proteolytic processing. Proapolipoprotein C-II, the major form found in plasma undergoes proteolytic cleavage of its N-terminal hexapeptide to generate apolipoprotein C-II, which occurs as the minor form in plasma. In terms of tissue distribution, liver.

The protein localises to the secreted. Component of chylomicrons, very low-density lipoproteins (VLDL), low-density lipoproteins (LDL), and high-density lipoproteins (HDL) in plasma. Plays an important role in lipoprotein metabolism as an activator of lipoprotein lipase. Both proapolipoprotein C-II and apolipoprotein C-II can activate lipoprotein lipase. The chain is Apolipoprotein C-II (APOC2) from Cavia porcellus (Guinea pig).